Reading from the N-terminus, the 431-residue chain is Serine hydroxymethyltransferase 3 (431 aa).

(6S)-5,6,7,8-tetrahydrofolate is bound by residues Leu-131 and 135–137; that span reads GHL. N6-(pyridoxal phosphate)lysine is present on Lys-240.

This sequence belongs to the SHMT family. As to quaternary structure, homodimer. It depends on pyridoxal 5'-phosphate as a cofactor.

It is found in the cytoplasm. It carries out the reaction (6R)-5,10-methylene-5,6,7,8-tetrahydrofolate + glycine + H2O = (6S)-5,6,7,8-tetrahydrofolate + L-serine. The protein operates within one-carbon metabolism; tetrahydrofolate interconversion. It functions in the pathway amino-acid biosynthesis; glycine biosynthesis; glycine from L-serine: step 1/1. Its function is as follows. Catalyzes the reversible interconversion of serine and glycine with tetrahydrofolate (THF) serving as the one-carbon carrier. This reaction serves as the major source of one-carbon groups required for the biosynthesis of purines, thymidylate, methionine, and other important biomolecules. Also exhibits THF-independent aldolase activity toward beta-hydroxyamino acids, producing glycine and aldehydes, via a retro-aldol mechanism. The protein is Serine hydroxymethyltransferase 3 of Colwellia psychrerythraea (strain 34H / ATCC BAA-681) (Vibrio psychroerythus).